The following is a 133-amino-acid chain: Peptidyl-prolyl cis-trans isomerase PIN4 (133 aa).

The segment covering 1–29 (MGKNDKKGADKGGKAKGGDKGKDAKDTKD) has biased composition (basic and acidic residues). The segment at 1-42 (MGKNDKKGADKGGKAKGGDKGKDAKDTKDSGSGGKAKGAQSI) is disordered. Residues 39–131 (AQSINVRHIL…FGYHIIMVEG (93 aa)) enclose the PpiC domain.

This sequence belongs to the PpiC/parvulin rotamase family. PIN4 subfamily.

It carries out the reaction [protein]-peptidylproline (omega=180) = [protein]-peptidylproline (omega=0). In terms of biological role, PPIases accelerate the folding of proteins. It catalyzes the cis-trans isomerization of proline imidic peptide bonds in oligopeptides. In Gibberella zeae (strain ATCC MYA-4620 / CBS 123657 / FGSC 9075 / NRRL 31084 / PH-1) (Wheat head blight fungus), this protein is Peptidyl-prolyl cis-trans isomerase PIN4 (PIN4).